Reading from the N-terminus, the 940-residue chain is UvrABC system protein A (940 aa).

33–40 (GVSGSGKS) is an ATP binding site. The segment at 252-279 (CPVCGFTVPELEPRLFSFNAPFGSCPDC) adopts a C4-type zinc-finger fold. ABC transporter domains lie at 309–586 (WYGK…KKSL) and 606–935 (IDKK…QYLK). 639–646 (GVSGSGKS) provides a ligand contact to ATP. The segment at 738-764 (CEACSGDGIIKIEMHFLPDVYVPCEVC) adopts a C4-type zinc-finger fold.

This sequence belongs to the ABC transporter superfamily. UvrA family. As to quaternary structure, forms a heterotetramer with UvrB during the search for lesions.

It localises to the cytoplasm. Functionally, the UvrABC repair system catalyzes the recognition and processing of DNA lesions. UvrA is an ATPase and a DNA-binding protein. A damage recognition complex composed of 2 UvrA and 2 UvrB subunits scans DNA for abnormalities. When the presence of a lesion has been verified by UvrB, the UvrA molecules dissociate. The protein is UvrABC system protein A of Lactococcus lactis subsp. lactis (strain IL1403) (Streptococcus lactis).